The chain runs to 488 residues: UDP-N-acetylmuramate--L-alanine ligase (488 aa).

122 to 128 (GTHGKTT) is an ATP binding site.

This sequence belongs to the MurCDEF family.

The protein localises to the cytoplasm. The catalysed reaction is UDP-N-acetyl-alpha-D-muramate + L-alanine + ATP = UDP-N-acetyl-alpha-D-muramoyl-L-alanine + ADP + phosphate + H(+). The protein operates within cell wall biogenesis; peptidoglycan biosynthesis. Cell wall formation. The protein is UDP-N-acetylmuramate--L-alanine ligase of Mycobacterium ulcerans (strain Agy99).